A 111-amino-acid chain; its full sequence is UPF0060 membrane protein CPR_1507 (111 aa).

The next 4 membrane-spanning stretches (helical) occupy residues 7–27, 33–53, 60–80, and 85–105; these read IFYF…IWLW, SLIY…IPTL, FGRV…LCGW, and IIPD…VLII.

Belongs to the UPF0060 family.

It is found in the cell membrane. This is UPF0060 membrane protein CPR_1507 from Clostridium perfringens (strain SM101 / Type A).